A 418-amino-acid polypeptide reads, in one-letter code: Deubiquitinase and deneddylase Dub1 (418 aa).

Residues 1 to 10 (MLSPTNSTSK) show a composition bias toward polar residues. The interval 1–23 (MLSPTNSTSKKAPVPPQDSSKPV) is disordered. Residues 40–60 (TALAVLLVVVTLGLILLFYSF) form a helical membrane-spanning segment. Residues 72-143 (TRPSTKEQPT…PPLPPKAPKP (72 aa)) form a disordered region. The span at 86–141 (VPLPSPPLAVPRPSTPPPPVISRPSTPPAPTPAISPPSTPSAPKPSTPPPLPPKAP) shows a compositional bias: pro residues. Catalysis depends on residues His-288, Asp-305, and Cys-358.

It belongs to the peptidase C48 family.

The protein localises to the secreted. It is found in the host cell. The protein resides in the membrane. Functionally, effector proteins function to alter host cell physiology and promote bacterial survival in host tissues. This protease possesses deubiquitinating and deneddylating activities. The polypeptide is Deubiquitinase and deneddylase Dub1 (cdu1) (Chlamydia trachomatis serovar D (strain ATCC VR-885 / DSM 19411 / UW-3/Cx)).